Here is a 418-residue protein sequence, read N- to C-terminus: Voltage-gated ClC-type chloride channel ClcB (418 aa).

The next 10 membrane-spanning stretches (helical) occupy residues Leu-5–Ala-25, Leu-54–Phe-74, Leu-146–Gly-166, Leu-168–Ile-188, Ala-222–Met-242, Trp-258–Trp-278, Ala-291–Ala-311, Gly-316–Tyr-336, Leu-352–Met-372, and Met-380–Ile-400.

Belongs to the chloride channel (TC 2.A.49) family. ClcB subfamily.

It is found in the cell inner membrane. Its function is as follows. Probably acts as an electrical shunt for an outwardly-directed proton pump that is linked to amino acid decarboxylation, as part of the extreme acid resistance (XAR) response. The sequence is that of Voltage-gated ClC-type chloride channel ClcB from Escherichia coli (strain SMS-3-5 / SECEC).